A 458-amino-acid polypeptide reads, in one-letter code: Argininosuccinate lyase (458 aa).

It belongs to the lyase 1 family. Argininosuccinate lyase subfamily.

It localises to the cytoplasm. The enzyme catalyses 2-(N(omega)-L-arginino)succinate = fumarate + L-arginine. It participates in amino-acid biosynthesis; L-arginine biosynthesis; L-arginine from L-ornithine and carbamoyl phosphate: step 3/3. The polypeptide is Argininosuccinate lyase (Bacillus velezensis (strain DSM 23117 / BGSC 10A6 / LMG 26770 / FZB42) (Bacillus amyloliquefaciens subsp. plantarum)).